Consider the following 190-residue polypeptide: GTP cyclohydrolase 1 (190 aa).

Positions 75, 78, and 146 each coordinate Zn(2+).

The protein belongs to the GTP cyclohydrolase I family. In terms of assembly, toroid-shaped homodecamer, composed of two pentamers of five dimers.

The enzyme catalyses GTP + H2O = 7,8-dihydroneopterin 3'-triphosphate + formate + H(+). It participates in cofactor biosynthesis; 7,8-dihydroneopterin triphosphate biosynthesis; 7,8-dihydroneopterin triphosphate from GTP: step 1/1. The protein is GTP cyclohydrolase 1 of Campylobacter jejuni subsp. doylei (strain ATCC BAA-1458 / RM4099 / 269.97).